The chain runs to 944 residues: Translation initiation factor IF-2 (944 aa).

Disordered stretches follow at residues 50-91 and 114-349; these read SAKT…FAGK and KVEV…VPAT. Composition is skewed to basic and acidic residues over residues 75–86, 124–157, 164–185, and 199–233; these read ESAKKNKEDHPR, VVTE…ETKD, AEVK…EKKK, and KRAE…DNRR. The segment covering 267 to 280 has biased composition (polar residues); it reads SSGSAPATDSFTPA. A compositionally biased stretch (basic and acidic residues) spans 286–307; the sequence is SRRDRDRKKSDNNRDNTKDGNR. Composition is skewed to polar residues over residues 317-331 and 338-348; these read NRNQ…NWNQ and YQNNQSSSVPA. The region spanning 443–614 is the tr-type G domain; that stretch reads ERPAVVTIMG…LLVAEVQELK (172 aa). The segment at 452 to 459 is G1; the sequence is GHVDHGKT. 452–459 is a binding site for GTP; that stretch reads GHVDHGKT. The interval 477–481 is G2; sequence GITQH. Positions 498 to 501 are G3; it reads DTPG. Residues 498–502 and 552–555 contribute to the GTP site; these read DTPGH and NKID. A G4 region spans residues 552–555; it reads NKID. A G5 region spans residues 590–592; the sequence is SAK.

The protein belongs to the TRAFAC class translation factor GTPase superfamily. Classic translation factor GTPase family. IF-2 subfamily.

It is found in the cytoplasm. Functionally, one of the essential components for the initiation of protein synthesis. Protects formylmethionyl-tRNA from spontaneous hydrolysis and promotes its binding to the 30S ribosomal subunits. Also involved in the hydrolysis of GTP during the formation of the 70S ribosomal complex. The sequence is that of Translation initiation factor IF-2 (infB) from Lactococcus lactis subsp. lactis (strain IL1403) (Streptococcus lactis).